The sequence spans 187 residues: MTDTLDLDRAVATLTQGGVIAYPTEAVWGLGCDPRQEAAVLRLLEIKRRPVEKGVIVVASSVDLLRDWVDIDALEPARRQDVLASWPGPHTWILPVTARAPRWVTGEHDGLAVRISAHPVVAALCAAWGAPLVSTSANLAGEPPARSRAALDPALLATIDGVVDGETGALAQPTQIRDARSGQILRD.

One can recognise a YrdC-like domain in the interval threonine 4 to aspartate 187.

It belongs to the SUA5 family. TsaC subfamily.

It is found in the cytoplasm. It catalyses the reaction L-threonine + hydrogencarbonate + ATP = L-threonylcarbamoyladenylate + diphosphate + H2O. Required for the formation of a threonylcarbamoyl group on adenosine at position 37 (t(6)A37) in tRNAs that read codons beginning with adenine. Catalyzes the conversion of L-threonine, HCO(3)(-)/CO(2) and ATP to give threonylcarbamoyl-AMP (TC-AMP) as the acyladenylate intermediate, with the release of diphosphate. This is Threonylcarbamoyl-AMP synthase from Xanthomonas euvesicatoria pv. vesicatoria (strain 85-10) (Xanthomonas campestris pv. vesicatoria).